A 213-amino-acid chain; its full sequence is uncharacterized protein (213 aa).

Residues Gly-53, Glu-74, and Asp-97 each coordinate S-adenosyl-L-methionine.

The protein belongs to the methyltransferase superfamily. YrrT family.

Could be a S-adenosyl-L-methionine-dependent methyltransferase. This is an uncharacterized protein from Bacillus subtilis (strain 168).